Reading from the N-terminus, the 271-residue chain is MDNRPIGLLDSGVGGLTVARELLRQLPNEEIVYIGDTRRAPYGPRSREQIIAFTWDMVNFLLSKDVKMIVMACNTATAMALEIVKEKLDIPVIGVILPGASSAIQKTKTNKIGVIATQASIRSDEYHKTIARKSSAVEVYSLACPKFVSIVESNEMESEIARKVVSESLVPLIGKVDTLILGCTHYPLLRSLIQETMGKEVRLIDSGAEAVRDISVLLNYFSINGQERQPLEHRFYTTAGVNSFREIAEKWLNIGQLQIEHTEIENFNKEK.

Substrate is bound by residues 10 to 11 (DS) and 42 to 43 (YG). Cys-73 serves as the catalytic Proton donor/acceptor. Residue 74–75 (NT) coordinates substrate. Cys-183 serves as the catalytic Proton donor/acceptor. 184–185 (TH) contacts substrate.

It belongs to the aspartate/glutamate racemases family.

The enzyme catalyses L-glutamate = D-glutamate. The protein operates within cell wall biogenesis; peptidoglycan biosynthesis. Provides the (R)-glutamate required for cell wall biosynthesis. The protein is Glutamate racemase of Lactococcus lactis subsp. lactis (strain IL1403) (Streptococcus lactis).